Reading from the N-terminus, the 318-residue chain is Quinolinate synthase (318 aa).

Iminosuccinate is bound by residues His-34 and Ser-51. Cys-96 provides a ligand contact to [4Fe-4S] cluster. Iminosuccinate contacts are provided by residues 122–124 and Ser-139; that span reads YIN. Cys-182 contributes to the [4Fe-4S] cluster binding site. Iminosuccinate contacts are provided by residues 208 to 210 and Thr-225; that span reads HPE. [4Fe-4S] cluster is bound at residue Cys-275.

This sequence belongs to the quinolinate synthase family. Type 2 subfamily. [4Fe-4S] cluster is required as a cofactor.

It is found in the cytoplasm. The catalysed reaction is iminosuccinate + dihydroxyacetone phosphate = quinolinate + phosphate + 2 H2O + H(+). It functions in the pathway cofactor biosynthesis; NAD(+) biosynthesis; quinolinate from iminoaspartate: step 1/1. In terms of biological role, catalyzes the condensation of iminoaspartate with dihydroxyacetone phosphate to form quinolinate. In Synechocystis sp. (strain ATCC 27184 / PCC 6803 / Kazusa), this protein is Quinolinate synthase.